The following is a 199-amino-acid chain: uncharacterized protein (199 aa).

Positions 71–104 (RANATNKLTVIAEQIQHLQEQARKVLEDARRDAD) form a coiled coil.

This is an uncharacterized protein from Mus musculus (Mouse).